A 210-amino-acid chain; its full sequence is 2,3-bisphosphoglycerate-dependent phosphoglycerate mutase (210 aa).

Substrate is bound by residues 9-16, 22-23, R61, 88-91, K99, 115-116, and 159-160; these read RHGQSEWN, TG, ERDY, RR, and GN. The active-site Tele-phosphohistidine intermediate is H10. The active-site Proton donor/acceptor is E88.

The protein belongs to the phosphoglycerate mutase family. BPG-dependent PGAM subfamily. Homodimer.

It carries out the reaction (2R)-2-phosphoglycerate = (2R)-3-phosphoglycerate. The protein operates within carbohydrate degradation; glycolysis; pyruvate from D-glyceraldehyde 3-phosphate: step 3/5. Functionally, catalyzes the interconversion of 2-phosphoglycerate and 3-phosphoglycerate. This is 2,3-bisphosphoglycerate-dependent phosphoglycerate mutase from Parvibaculum lavamentivorans (strain DS-1 / DSM 13023 / NCIMB 13966).